The following is a 284-amino-acid chain: Phosphate import ATP-binding protein PstB 2 (284 aa).

Residues 1-22 (MTLLSTLRGISSPARQQPGTQS) are compositionally biased toward polar residues. Residues 1–29 (MTLLSTLRGISSPARQQPGTQSESRRGGD) form a disordered region. Residues 36 to 278 (LAVAGVSHGF…PDDARARKFI (243 aa)) enclose the ABC transporter domain. 68-75 (GPSGTGKT) is an ATP binding site.

This sequence belongs to the ABC transporter superfamily. Phosphate importer (TC 3.A.1.7) family. The complex is composed of two ATP-binding proteins (PstB), two transmembrane proteins (PstC and PstA) and a solute-binding protein (PstS).

The protein resides in the cell membrane. The enzyme catalyses phosphate(out) + ATP + H2O = ADP + 2 phosphate(in) + H(+). Its function is as follows. Part of the ABC transporter complex PstSACB involved in phosphate import. Responsible for energy coupling to the transport system. This Natronomonas pharaonis (strain ATCC 35678 / DSM 2160 / CIP 103997 / JCM 8858 / NBRC 14720 / NCIMB 2260 / Gabara) (Halobacterium pharaonis) protein is Phosphate import ATP-binding protein PstB 2.